The sequence spans 109 residues: uncharacterized protein (109 aa).

The disordered stretch occupies residues 1-26 (MTPRSLPRYGNSSRRKSFPMHRPSNV).

This is an uncharacterized protein from Mycobacterium bovis (strain ATCC BAA-935 / AF2122/97).